The primary structure comprises 206 residues: Phosphoribosyl-dephospho-CoA transferase (206 aa).

Catalysis depends on residues Asp-131 and Asp-133.

The protein belongs to the MdcG family.

It catalyses the reaction apo-[malonate decarboxylase ACP] + 2'-(5''-triphospho-alpha-D-ribosyl)-3'-dephospho-CoA = holo-[malonate decarboxylase ACP] + diphosphate. Its function is as follows. Transfers 2'-(5-triphosphoribosyl)-3'-dephosphocoenzyme-A to the apo-[acyl-carrier-protein] of the malonate decarboxylase to yield holo-[acyl-carrier-protein]. In Pseudomonas fluorescens (strain Pf0-1), this protein is Phosphoribosyl-dephospho-CoA transferase.